Consider the following 224-residue polypeptide: dTTP/UTP pyrophosphatase (224 aa).

The Proton acceptor role is filled by Asp77.

This sequence belongs to the Maf family. YhdE subfamily. A divalent metal cation is required as a cofactor.

The protein localises to the cytoplasm. It catalyses the reaction dTTP + H2O = dTMP + diphosphate + H(+). The enzyme catalyses UTP + H2O = UMP + diphosphate + H(+). Functionally, nucleoside triphosphate pyrophosphatase that hydrolyzes dTTP and UTP. May have a dual role in cell division arrest and in preventing the incorporation of modified nucleotides into cellular nucleic acids. This Dehalococcoides mccartyi (strain CBDB1) protein is dTTP/UTP pyrophosphatase.